The sequence spans 110 residues: DNA-directed RNA polymerase subunit omega (110 aa).

The protein belongs to the RNA polymerase subunit omega family. In terms of assembly, the RNAP catalytic core consists of 2 alpha, 1 beta, 1 beta' and 1 omega subunit. When a sigma factor is associated with the core the holoenzyme is formed, which can initiate transcription.

The enzyme catalyses RNA(n) + a ribonucleoside 5'-triphosphate = RNA(n+1) + diphosphate. Promotes RNA polymerase assembly. Latches the N- and C-terminal regions of the beta' subunit thereby facilitating its interaction with the beta and alpha subunits. This is DNA-directed RNA polymerase subunit omega from Nocardioides sp. (strain ATCC BAA-499 / JS614).